The following is a 492-amino-acid chain: GTPase Obg (492 aa).

The 158-residue stretch at 2-159 (PRFVDRVVIH…RELTLELKTV (158 aa)) folds into the Obg domain. The OBG-type G domain maps to 160-340 (ADVGLIGFPS…LIFGLWQMIS (181 aa)). GTP contacts are provided by residues 166–173 (GFPSAGKS), 191–195 (FTTLV), 212–215 (DVPG), 292–295 (NKID), and 321–323 (STV). The Mg(2+) site is built by serine 173 and threonine 193. In terms of domain architecture, OCT spans 358-438 (PVPVDDSGFR…IGDMTFDWEP (81 aa)). Positions 441 to 492 (PAGQQVVLSGRGTDARLERTERVGAAERKAARRQRRTGDDAERGTTERGENT) are disordered. Composition is skewed to basic and acidic residues over residues 453–469 (TDAR…AERK) and 476–492 (RTGD…GENT).

This sequence belongs to the TRAFAC class OBG-HflX-like GTPase superfamily. OBG GTPase family. As to quaternary structure, monomer. It depends on Mg(2+) as a cofactor.

The protein localises to the cytoplasm. An essential GTPase which binds GTP, GDP and possibly (p)ppGpp with moderate affinity, with high nucleotide exchange rates and a fairly low GTP hydrolysis rate. Plays a role in control of the cell cycle, stress response, ribosome biogenesis and in those bacteria that undergo differentiation, in morphogenesis control. This chain is GTPase Obg, found in Mycolicibacterium paratuberculosis (strain ATCC BAA-968 / K-10) (Mycobacterium paratuberculosis).